The chain runs to 901 residues: Protein translocase subunit SecA (901 aa).

ATP-binding positions include Gln-85, Gly-103–Thr-107, and Asp-510. Residues Thr-847–Gln-901 form a disordered region. The segment covering Arg-848 to Ser-866 has biased composition (polar residues). Residues Cys-882, Cys-884, Cys-893, and His-894 each coordinate Zn(2+). Basic residues predominate over residues Lys-888–Gln-901.

It belongs to the SecA family. In terms of assembly, monomer and homodimer. Part of the essential Sec protein translocation apparatus which comprises SecA, SecYEG and auxiliary proteins SecDF-YajC and YidC. Zn(2+) is required as a cofactor.

The protein resides in the cell inner membrane. It is found in the cytoplasm. The enzyme catalyses ATP + H2O + cellular proteinSide 1 = ADP + phosphate + cellular proteinSide 2.. In terms of biological role, part of the Sec protein translocase complex. Interacts with the SecYEG preprotein conducting channel. Has a central role in coupling the hydrolysis of ATP to the transfer of proteins into and across the cell membrane, serving both as a receptor for the preprotein-SecB complex and as an ATP-driven molecular motor driving the stepwise translocation of polypeptide chains across the membrane. This Haemophilus influenzae (strain PittGG) protein is Protein translocase subunit SecA.